Here is a 235-residue protein sequence, read N- to C-terminus: Claudin-16 (235 aa).

The Cytoplasmic portion of the chain corresponds to 1–3; that stretch reads MKD. The helical transmembrane segment at 4–24 threads the bilayer; it reads LLQYAACFLAIFSTGFLIVAT. The Extracellular segment spans residues 25–79; that stretch reads RTDCWMVNADDSLEVSTKCRGLWWECVTNAFDGIRTCDEYDSIYAEHPLKLVVTR. The chain crosses the membrane as a helical span at residues 80 to 100; it reads ALMITADILAGFGFITLLLGL. The Cytoplasmic portion of the chain corresponds to 101-115; the sequence is DCVKFLPDEPHIKVR. A helical transmembrane segment spans residues 116-136; sequence LCFVAGTVLLIAGTPGIIGSV. The Extracellular portion of the chain corresponds to 137–169; sequence WYAVDVYVERSSLVLHNIFLGIQYKFGWSCWLG. A helical membrane pass occupies residues 170 to 190; the sequence is MAGSLGCFLAGALLTCCLYLF. Over 191–235 the chain is Cytoplasmic; the sequence is KDVGPERNYPYAMRKPYSTAGVSMAKSYKAPRTETAKMYAVDTRV. The Interaction with TJP1 motif lies at 233–235; it reads TRV.

This sequence belongs to the claudin family. As to quaternary structure, can form heteropolymeric tight junction strands with other claudins. Interacts with CLDN19. Interacts (via PDZ-binding motif TRV) with TJP1 (via PDZ domain). Cannot form tight junction strands on its own.

The protein localises to the cell junction. It localises to the tight junction. Its subcellular location is the cell membrane. It catalyses the reaction Mg(2+)(in) = Mg(2+)(out). The catalysed reaction is Ca(2+)(in) = Ca(2+)(out). The enzyme catalyses Na(+)(in) = Na(+)(out). It carries out the reaction K(+)(in) = K(+)(out). It catalyses the reaction Rb(+)(in) = Rb(+)(out). The catalysed reaction is Cs(+)(in) = Cs(+)(out). The enzyme catalyses Li(+)(in) = Li(+)(out). Functionally, forms paracellular channels: coassembles with CLDN19 into tight junction strands with cation-selective channels through the strands, conveying epithelial permeability in a process known as paracellular tight junction permeability. Involved in the maintenance of ion gradients along the nephron. In the thick ascending limb (TAL) of Henle's loop, facilitates sodium paracellular permeability from the interstitial compartment to the lumen, contributing to the lumen-positive transepithelial potential that drives paracellular magnesium and calcium reabsorption. This is Claudin-16 from Rattus norvegicus (Rat).